A 269-amino-acid chain; its full sequence is Proline-rich protein 7 (269 aa).

The Extracellular segment spans residues 1 to 9 (MVMSQGTYT). A required for interaction with NMDA receptors region spans residues 1–44 (MVMSQGTYTFLTCFAGFWLIWGLIVLLCCFCSFLRRRLKRRQEE). The interval 2 to 39 (VMSQGTYTFLTCFAGFWLIWGLIVLLCCFCSFLRRRLK) is required for membrane localization. A helical; Signal-anchor for type III membrane protein transmembrane segment spans residues 10-30 (FLTCFAGFWLIWGLIVLLCCF). At 31 to 269 (CSFLRRRLKR…IPLFGRTTAV (239 aa)) the chain is on the cytoplasmic side. Phosphoserine is present on Ser64. Disordered stretches follow at residues 64 to 83 (SLAGSPPGLAPPPPPHRSRL) and 98 to 128 (LLHHGPAQPHAHPHPHHHALPHPPPSHLSVP). Basic residues predominate over residues 108-117 (AHPHPHHHAL). A compositionally biased stretch (pro residues) spans 118–128 (PHPPPSHLSVP). The tract at residues 146–166 (PCYEEAVLMAEPPPPYSEVLT) is required for internalization. The segment at 146–269 (PCYEEAVLMA…IPLFGRTTAV (124 aa)) is required for apoptosis induction. The PDZ-binding signature appears at 267–269 (TAV).

As to quaternary structure, forms a complex with NMDA receptor zeta subunit GRIN1 and epsilon subunit GRIN2B. Interacts with GRIN2B. Interacts with GRIN1; the interaction is reduced upon NMDA receptor activity. Found in a postsynaptic membrane complex with DLG4 and GRIN1. Interacts with DLG4 (via PDZ3 domain and to lesser degree via PDZ2 domain). Interacts with FBXW7. Found in a complex with JUN and FBXW7. Interacts with JUN and FBXW7; the interaction inhibits ubiquitination-mediated JUN degradation promoting its phosphorylation and transcriptional activity. Interacts with SRC. In terms of processing, palmitoylated. Post-translationally, tyrosine phosphorylated, possibly by SRC. In terms of tissue distribution, expressed in brain. Expressed in the cerebral cortex and especially in hippocampal neural cells (at protein level).

It localises to the cell membrane. The protein localises to the postsynaptic cell membrane. The protein resides in the postsynaptic density membrane. Its subcellular location is the cytoplasm. It is found in the perinuclear region. It localises to the synapse. The protein localises to the cell projection. The protein resides in the dendrite. Its subcellular location is the nucleus. Acts as a synapse-to-nucleus messenger to promote NMDA receptor-mediated excitotoxicity in neurons in a JUN-dependent manner. Inhibits ubiquitination-mediated degradation and promotes phosphorylation and transcriptional activity of transcription factor JUN. Might play a redundant role in the regulation of T cell receptor signaling. Might promote apoptosis in T cells. The chain is Proline-rich protein 7 (Prr7) from Rattus norvegicus (Rat).